A 345-amino-acid chain; its full sequence is S-adenosylmethionine:tRNA ribosyltransferase-isomerase (345 aa).

The protein belongs to the QueA family. Monomer.

The protein localises to the cytoplasm. The enzyme catalyses 7-aminomethyl-7-carbaguanosine(34) in tRNA + S-adenosyl-L-methionine = epoxyqueuosine(34) in tRNA + adenine + L-methionine + 2 H(+). It participates in tRNA modification; tRNA-queuosine biosynthesis. In terms of biological role, transfers and isomerizes the ribose moiety from AdoMet to the 7-aminomethyl group of 7-deazaguanine (preQ1-tRNA) to give epoxyqueuosine (oQ-tRNA). This chain is S-adenosylmethionine:tRNA ribosyltransferase-isomerase, found in Shewanella baltica (strain OS155 / ATCC BAA-1091).